The sequence spans 378 residues: uncharacterized protein (378 aa).

Belongs to the mimivirus L17x/L18x family.

This is an uncharacterized protein from Acanthamoeba polyphaga (Amoeba).